A 280-amino-acid chain; its full sequence is Pantothenate synthetase (280 aa).

Met30–His37 provides a ligand contact to ATP. The active-site Proton donor is His37. Gln61 provides a ligand contact to (R)-pantoate. Gln61 is a binding site for beta-alanine. Gly147–Asp150 serves as a coordination point for ATP. Residue Gln153 coordinates (R)-pantoate. ATP is bound by residues Val176 and Met184–Arg187.

Belongs to the pantothenate synthetase family. In terms of assembly, homodimer.

It localises to the cytoplasm. It carries out the reaction (R)-pantoate + beta-alanine + ATP = (R)-pantothenate + AMP + diphosphate + H(+). It participates in cofactor biosynthesis; (R)-pantothenate biosynthesis; (R)-pantothenate from (R)-pantoate and beta-alanine: step 1/1. In terms of biological role, catalyzes the condensation of pantoate with beta-alanine in an ATP-dependent reaction via a pantoyl-adenylate intermediate. The polypeptide is Pantothenate synthetase (Thermotoga neapolitana).